Consider the following 128-residue polypeptide: Ribonuclease pancreatic B (128 aa).

Residues 1 to 21 (AESSAMKFQRQHMDPEGSPSN) form a disordered region. Positions 7 and 10 each coordinate substrate. Catalysis depends on histidine 12, which acts as the Proton acceptor. Asparagine 21 and asparagine 34 each carry an N-linked (GlcNAc...) asparagine glycan. Disulfide bonds link cysteine 26/cysteine 84, cysteine 40/cysteine 95, cysteine 58/cysteine 110, and cysteine 65/cysteine 72. Residues 41–45 (KPVNT), lysine 66, and arginine 85 contribute to the substrate site. Histidine 119 serves as the catalytic Proton donor.

Belongs to the pancreatic ribonuclease family. In terms of tissue distribution, pancreas.

Its subcellular location is the secreted. It carries out the reaction an [RNA] containing cytidine + H2O = an [RNA]-3'-cytidine-3'-phosphate + a 5'-hydroxy-ribonucleotide-3'-[RNA].. The enzyme catalyses an [RNA] containing uridine + H2O = an [RNA]-3'-uridine-3'-phosphate + a 5'-hydroxy-ribonucleotide-3'-[RNA].. This chain is Ribonuclease pancreatic B, found in Cavia porcellus (Guinea pig).